Consider the following 429-residue polypeptide: Glutamate-1-semialdehyde 2,1-aminomutase (429 aa).

The residue at position 267 (Lys-267) is an N6-(pyridoxal phosphate)lysine.

This sequence belongs to the class-III pyridoxal-phosphate-dependent aminotransferase family. HemL subfamily. In terms of assembly, homodimer. Pyridoxal 5'-phosphate serves as cofactor.

It localises to the cytoplasm. The enzyme catalyses (S)-4-amino-5-oxopentanoate = 5-aminolevulinate. The protein operates within porphyrin-containing compound metabolism; protoporphyrin-IX biosynthesis; 5-aminolevulinate from L-glutamyl-tRNA(Glu): step 2/2. In Herpetosiphon aurantiacus (strain ATCC 23779 / DSM 785 / 114-95), this protein is Glutamate-1-semialdehyde 2,1-aminomutase.